The chain runs to 1549 residues: MAEREVETGPRKRFEQKSDAVFDEIVENCGVMDTEMSEDTDHNLTPTLASMSYGMPNQTGSENSLLDEDDYFLNSGDLAGIPVVSSDNEDEQDCSSKDNLVSSVHTDGSLEVERRAAHQESDNENEIQIQNQLKKDFPKQFDQVSVFKSIRKDFCLVRENSKETFSGKEKNRDLTYHEREKRLDKPHKGLDSRLKSSFFDKAANQVEETLHTHLPQNPETNFRDSSYPFASKESIGSELGNSFASNIRIKEEPLDDEYDRAVAPQQGLLDRVKDEPDNAQEYSHGQQQKTQEGELKISAVFSVSGSPLAPQLTTGFQPSLASPGMNKMLPSVPATAVRVSCSGCKKILQKGQTAYQRKGSTQLFCSTLCLTGYTVPPARPPPPLTKKTCSSCSKDILNPKDVISAQFENSTTSKDFCSQSCLSTYELKKKPIVTINTNSISTKCSMCQKNAVIRHEVNYQNVVHKLCSDACFSKFRSANNLTMNCCENCGGYCYSGSGQCHVLQIEGQSKKFCSSMCVTSYKQKSAKITPCALCKSLRSSAEMIENTNSLGKTELFCSVNCLSAYRVKMVTSAGVQVQCNSCKTSAIPQYHLAMSDGSIRNFCSYSCVVAFQNLFNKPTGMNSSVVPLSQGQVIVSIPTGSSASAGGGSTPAVSPTSINSSAAAGLQRLAAQSQHVGFARSVVKLRCQHCNRLFATKPELLDYKGKMFQFCGKNCCDEYKKINNVMAMCEYCKIEKIIKETVRFSGADKSFCSEGCKLLYKHDLGKRWGSHCKMCSYCLQTSPKLIQNNLGGKVEDFCCEECMSKYTVLFYQMAKCDGCKRQGKLSESLKWRGDIKHFCNLLCILMFCHQQTVCDPPLQNNAVASISMVQAASAGPPSLRKDSTPVIANVVSLASAPAAQPTANTNSVLQGAVPTVTAKIIGDASTQTDALKLPPSQPPRLLKNKALLCKPITQTKATSCKPHTQNKECQTDTPSEPQVMVVPVPVPVFVPIPLHLYTQYTPVPFGIPVPMPVPMFIPSSMDNDEKATEGIEDIKEKLATHPFEADLLEMAEMIAEDEEKEKTLSQGESQTSEQELFLDTKIFEKDQGSTYSGDLESEAVSTPHSWEEELNHYALKSNAVQDADSELKPFSKGETEQDLEADFPSESFDPLNKGQGIQARSRTRRRHRDGFPQPRRRGRKKSVVPVEPRSLIQGALQGCSVSGMTLKYMYGVNAWKNWVQWKNAKDEQGDLKCGGGELASASPCSDSLGSAQDHALSQESSEQGCKARSVKLKEDILSCTFSELSLGLCQFIQEVRRPNGEKYDPDSILYLCLGIQQYLFENGRIDNIFTEPYSRFMIELTKLLKIWEPTILPNGYMFSRIEEEHLWECKQLGAYSPIVLLNTLLFFNTKYFQLRNVTEHLKLSFAHVMRRTRTLKYSTKMTYLRFFPPLQKPESEPDKVTIGKRKRNEDDEAPVGVEMAENTDNPLRCPVRLYEFYLSKCSESVKQRSDVFYLQPERSCVPNSPMWYSTFPIDPGTLDTMLTRILMVREVHEELAKAKSEDSDAELSD.

The residue at position 2 (alanine 2) is an N-acetylalanine. The segment at 83 to 108 (VVSSDNEDEQDCSSKDNLVSSVHTDG) is disordered. A compositionally biased stretch (polar residues) spans 97-106 (KDNLVSSVHT). At threonine 106 the chain carries Phosphothreonine. Residues serine 109 and serine 121 each carry the phosphoserine modification. Glycyl lysine isopeptide (Lys-Gly) (interchain with G-Cter in SUMO2) cross-links involve residues lysine 139 and lysine 148. At serine 161 the chain carries Phosphoserine. Lysine 195 is covalently cross-linked (Glycyl lysine isopeptide (Lys-Gly) (interchain with G-Cter in SUMO2)). Phosphoserine is present on serine 197. Glycyl lysine isopeptide (Lys-Gly) (interchain with G-Cter in SUMO2) cross-links involve residues lysine 201 and lysine 232. Residue serine 242 is modified to Phosphoserine. A Glycyl lysine isopeptide (Lys-Gly) (interchain with G-Cter in SUMO1); alternate cross-link involves residue lysine 250. Lysine 250 participates in a covalent cross-link: Glycyl lysine isopeptide (Lys-Gly) (interchain with G-Cter in SUMO2); alternate. The disordered stretch occupies residues 267–291 (GLLDRVKDEPDNAQEYSHGQQQKTQ). Glycyl lysine isopeptide (Lys-Gly) (interchain with G-Cter in SUMO2) cross-links involve residues lysine 273, lysine 289, lysine 327, lysine 400, lysine 428, and lysine 430. Over residues 280-290 (QEYSHGQQQKT) the composition is skewed to polar residues. 9 consecutive MYM-type zinc fingers follow at residues 362-402 (QLFC…PKDV), 414-457 (KDFC…RHEV), 464-499 (HKLCSDACFSKFRSANNLTMNCCENCGGYCYSGSGQ), 510-544 (KKFCSSMCVTSYKQKSAKITPCALCKSLRSSAEMI), 554-592 (ELFCSVNCLSAYRVKMVTSAGVQVQCNSCKTSAIPQYHL), 600-631 (RNFCSYSCVVAFQNLFNKPTGMNSSVVPLSQG), 708-742 (FQFCGKNCCDEYKKINNVMAMCEYCKIEKIIKETV), 749-788 (KSFCSEGCKLLYKHDLGKRWGSHCKMCSYCLQTSPKLIQN), and 795-829 (EDFCCEECMSKYTVLFYQMAKCDGCKRQGKLSESL). Residues lysine 1035 and lysine 1062 each participate in a glycyl lysine isopeptide (Lys-Gly) (interchain with G-Cter in SUMO2) cross-link. A phosphoserine mark is found at serine 1065 and serine 1072. Glycyl lysine isopeptide (Lys-Gly) (interchain with G-Cter in SUMO2) cross-links involve residues lysine 1081 and lysine 1128. The interval 1124–1185 (DSELKPFSKG…RRGRKKSVVP (62 aa)) is disordered. Residues 1125–1135 (SELKPFSKGET) show a composition bias toward basic and acidic residues. Residues 1161–1182 (SRTRRRHRDGFPQPRRRGRKKS) show a composition bias toward basic residues. Residues serine 1182 and serine 1257 each carry the phosphoserine modification. Residue lysine 1432 forms a Glycyl lysine isopeptide (Lys-Gly) (interchain with G-Cter in SUMO2) linkage. Serine 1540, serine 1543, and serine 1548 each carry phosphoserine.

Its function is as follows. Plays a role in the regulation of cell morphology and cytoskeletal organization. This is Zinc finger MYM-type protein 4 (Zmym4) from Mus musculus (Mouse).